Consider the following 123-residue polypeptide: Small ribosomal subunit protein uS12 (123 aa).

Asp-89 is modified (3-methylthioaspartic acid).

Belongs to the universal ribosomal protein uS12 family. As to quaternary structure, part of the 30S ribosomal subunit. Contacts proteins S8 and S17. May interact with IF1 in the 30S initiation complex.

With S4 and S5 plays an important role in translational accuracy. Functionally, interacts with and stabilizes bases of the 16S rRNA that are involved in tRNA selection in the A site and with the mRNA backbone. Located at the interface of the 30S and 50S subunits, it traverses the body of the 30S subunit contacting proteins on the other side and probably holding the rRNA structure together. The combined cluster of proteins S8, S12 and S17 appears to hold together the shoulder and platform of the 30S subunit. This is Small ribosomal subunit protein uS12 from Prochlorococcus marinus (strain MIT 9211).